Reading from the N-terminus, the 333-residue chain is Phosphate acyltransferase (333 aa).

Belongs to the PlsX family. Homodimer. Probably interacts with PlsY.

The protein resides in the cytoplasm. The catalysed reaction is a fatty acyl-[ACP] + phosphate = an acyl phosphate + holo-[ACP]. Its pathway is lipid metabolism; phospholipid metabolism. Catalyzes the reversible formation of acyl-phosphate (acyl-PO(4)) from acyl-[acyl-carrier-protein] (acyl-ACP). This enzyme utilizes acyl-ACP as fatty acyl donor, but not acyl-CoA. The sequence is that of Phosphate acyltransferase from Pelagibacter ubique (strain HTCC1062).